We begin with the raw amino-acid sequence, 216 residues long: Trimethylamine corrinoid protein 1 (216 aa).

Positions 1 to 92 constitute a B12-binding N-terminal domain; that stretch reads MASKEEIIAK…EMEKRKSETK (92 aa). Residues 94 to 216 form the B12-binding domain; that stretch reads LGTVVIGTIE…VVSKVRAVLL (123 aa). A methylcob(III)alamin-binding site is contributed by histidine 107.

It belongs to the methylamine corrinoid protein family. Can form a complex with MttB.

It functions in the pathway one-carbon metabolism; methanogenesis from trimethylamine. Its function is as follows. Acts probably as a methyl group carrier between MttB and either MtbA or MtaA. This is Trimethylamine corrinoid protein 1 (mttC1) from Methanosarcina acetivorans (strain ATCC 35395 / DSM 2834 / JCM 12185 / C2A).